The chain runs to 505 residues: MEFFQRYIELDRSWQHNFFYPLIFQEYIYGFAYDHGLNKSILLENADDKKYSLLIVKRLITRMYQQNHLILAANNSNQNDFLGHKHKKNLYYQMISEGFAVIVEIPFSLLLISSLEGKEKKIVKSHNLRSIHSVFPFFEDKFLHLNYVLEILIPYPIHLEILVQTLRYWVKDASALHLLRFFLYCNSLITPSKSISIFSKRNQRLFLFLYNFHVCEYESIFVFLCNQSSHLRSTSFGDLLQRIYFYGKLEYLVKVKTFTKDFRIILWLFKDPFLHYVRYRGKSILASKGTSLLMHKWKYYLIHFWQCHFSLWSQPRRIYINRLSKHSLDFMGFFSSVRLNSSVVRSQMVENAFLIDNTIKKFDTIIRIIPLVGSLAKAKFCNVLGHPISKSVWADLLDSDIIDRFGRICRNLSHYYSGSSRKKSLYRIKYILRLSCARTLARKHKSTVRAFLKTLGSEFLEEFFTEEEKVLSLILPRDSSISRGLYRGPIWYLDIICIHDLANDD.

The protein belongs to the intron maturase 2 family. MatK subfamily.

The protein localises to the plastid. It is found in the chloroplast. Its function is as follows. Usually encoded in the trnK tRNA gene intron. Probably assists in splicing its own and other chloroplast group II introns. The chain is Maturase K from Portulacaria afra (Elephant's food).